The following is a 325-amino-acid chain: NADH-quinone oxidoreductase subunit H (325 aa).

The next 8 membrane-spanning stretches (helical) occupy residues Val11 to Phe31, Val81 to Val101, Ile114 to Gly134, Leu154 to Phe174, Leu186 to Val206, Phe237 to Phe257, Leu265 to Ile285, and Val304 to Ala324.

Belongs to the complex I subunit 1 family. NDH-1 is composed of 13 different subunits. Subunits NuoA, H, J, K, L, M, N constitute the membrane sector of the complex.

It localises to the cell inner membrane. It carries out the reaction a quinone + NADH + 5 H(+)(in) = a quinol + NAD(+) + 4 H(+)(out). NDH-1 shuttles electrons from NADH, via FMN and iron-sulfur (Fe-S) centers, to quinones in the respiratory chain. The immediate electron acceptor for the enzyme in this species is believed to be ubiquinone. Couples the redox reaction to proton translocation (for every two electrons transferred, four hydrogen ions are translocated across the cytoplasmic membrane), and thus conserves the redox energy in a proton gradient. This subunit may bind ubiquinone. The protein is NADH-quinone oxidoreductase subunit H of Erwinia tasmaniensis (strain DSM 17950 / CFBP 7177 / CIP 109463 / NCPPB 4357 / Et1/99).